The chain runs to 555 residues: Glutamine--tRNA ligase (555 aa).

The 'HIGH' region motif lies at 34–44 (PEPNGYLHIGH). Residues 35 to 37 (EPN) and 41 to 47 (HIGHAKS) each bind ATP. Aspartate 67 and tyrosine 212 together coordinate L-glutamine. Residues threonine 231, 261–262 (RL), and 269–271 (MSK) each bind ATP. Positions 268 to 272 (VMSKR) match the 'KMSKS' region motif. The segment at 317-324 (TKQDNTIE) is interaction with tRNA.

This sequence belongs to the class-I aminoacyl-tRNA synthetase family. Monomer.

The protein resides in the cytoplasm. It catalyses the reaction tRNA(Gln) + L-glutamine + ATP = L-glutaminyl-tRNA(Gln) + AMP + diphosphate. This Salmonella agona (strain SL483) protein is Glutamine--tRNA ligase.